The following is a 212-amino-acid chain: Protein G1-like7 (212 aa).

The span at 1 to 22 shows a compositional bias: low complexity; the sequence is MDPSGPGPSSAAAGGAPAVAAA. Disordered stretches follow at residues 1–34 and 148–212; these read MDPS…RYES and KARG…PSAS. Positions 31-158 constitute an ALOG domain; that stretch reads RYESQKRRDW…ARGIPYEKKK (128 aa). The Nuclear localization signal motif lies at 156–160; sequence KKKRK. The span at 173 to 182 shows a compositional bias: low complexity; that stretch reads SGSSSAAAAA. Positions 183 to 194 are enriched in gly residues; the sequence is AGGGDTGSGGGA.

This sequence belongs to the plant homeotic and developmental regulators ALOG protein family.

The protein localises to the nucleus. In terms of biological role, probable transcription regulator that acts as a developmental regulator by promoting cell growth in response to light. The protein is Protein G1-like7 of Oryza sativa subsp. indica (Rice).